The following is a 316-amino-acid chain: MSFASEMKNELTRIETDLCCSKAELAALIRMNGNLNIQNMQWVINVQSENAAIARRVYSLTKKIFGVDIELLVRKKMKLKKNNVYICRIKMKTKEILDELSILQDGQFVQHIDQSLIKEECCKRSYLRGAFLAGGSVNNPETSSYHLEIFSLYESHSEGLTEMMNGYGLNAKTLERKKGYISYLKEAEKISDFLSIIGGYQALLKFEDVRIVRDMRNSVNRLVNCETANLNKTIGAAMRQVENIRLIDEEIGIDELPERLREIARLRVQHQDISLKELGEMVSTGVISKSGVNHRLRKIDEIAEKLRNGEHIELKK.

The segment at residues 274–308 is a DNA-binding region (H-T-H motif); that stretch reads SLKELGEMVSTGVISKSGVNHRLRKIDEIAEKLRN.

Belongs to the WhiA family.

Involved in cell division and chromosome segregation. The sequence is that of Probable cell division protein WhiA from Macrococcus caseolyticus (strain JCSC5402) (Macrococcoides caseolyticum).